Reading from the N-terminus, the 239-residue chain is ATP-dependent dethiobiotin synthetase BioD (239 aa).

An ATP-binding site is contributed by 15–20 (EIGKTF). Mg(2+) is bound at residue Thr-19. Lys-40 is an active-site residue. ATP is bound by residues Asp-57, 118–121 (EGVG), and 178–179 (NH). Mg(2+) is bound by residues Asp-57 and Glu-118.

It belongs to the dethiobiotin synthetase family. Homodimer. Mg(2+) serves as cofactor.

It localises to the cytoplasm. The enzyme catalyses (7R,8S)-7,8-diammoniononanoate + CO2 + ATP = (4R,5S)-dethiobiotin + ADP + phosphate + 3 H(+). The protein operates within cofactor biosynthesis; biotin biosynthesis; biotin from 7,8-diaminononanoate: step 1/2. Its function is as follows. Catalyzes a mechanistically unusual reaction, the ATP-dependent insertion of CO2 between the N7 and N8 nitrogen atoms of 7,8-diaminopelargonic acid (DAPA, also called 7,8-diammoniononanoate) to form a ureido ring. This chain is ATP-dependent dethiobiotin synthetase BioD, found in Burkholderia multivorans (strain ATCC 17616 / 249).